Here is a 96-residue protein sequence, read N- to C-terminus: Putative pterin-4-alpha-carbinolamine dehydratase (96 aa).

It belongs to the pterin-4-alpha-carbinolamine dehydratase family.

The enzyme catalyses (4aS,6R)-4a-hydroxy-L-erythro-5,6,7,8-tetrahydrobiopterin = (6R)-L-erythro-6,7-dihydrobiopterin + H2O. The polypeptide is Putative pterin-4-alpha-carbinolamine dehydratase (Prochlorococcus marinus (strain SARG / CCMP1375 / SS120)).